A 643-amino-acid chain; its full sequence is E3 ubiquitin-protein ligase AMFR (643 aa).

Transmembrane regions (helical) follow at residues 82–102 (LFVW…AKLI), 122–142 (FWNF…VQTV), 186–206 (VLSL…VCCV), 215–235 (TLAF…HVIL), 254–274 (GTYV…LDLM), and 276–296 (HIHM…VIFM). An RING-type zinc finger spans residues 341–379 (CAICWDSMQAARKLPCGHLFHNSCLRSWLEQDTSCPTCR). The helical transmembrane segment at 429-449 (IASWLPSFSVEVMHTTNILGI) threads the bilayer. A CUE domain is found at 456–498 (QLNAMAHQIQEMFPQVPYHLVLQDLQMTRSVEITTDNILEGRI). Residues 504–535 (TQRSDSLRPALNSPVERPSPDLEEGEASVQTE) are disordered. A phosphoserine mark is found at serine 516 and serine 542. The segment at 598 to 624 (LNKSSEDDGASERLLPSEGTSSDPVTL) is disordered. Residues 622–640 (VTLRRRMLAAAAERRLQRQ) form a VCP/p97-interacting motif (VIM) region.

Interacts with RNF5. Also forms an ERAD complex containing VCP/p97, NGLY1; PSMC1; SAKS1 and RAD23B required for coupling retrotranslocation, ubiquitination and deglycosylation. Interacts with DERL1. Interacts (through a region distinct from the RING finger) with UBE2G2/UBC7. Component of the VCP/p97-AMFR/gp78 complex that enhances VCP/p97 binding to polyubiquitinated proteins for their degradation by the endoplasmic reticulum-associated degradation (ERAD) pathway. Interacts (via the VIM) with VCP/p97. Interacts (via its membrane domain) with INSIG1; the interaction initiates the sterol-mediated ubiquitination and degradation of HMGCR by the ERAD pathway. Interacts with AUP1, UBE2G2 and RNF139/TRC8; interaction with AUP1 facilitates interaction of AMFR with ubiquitin-conjugating enzyme UBE2G2 and ubiquitin ligase RNF139, leading to sterol-induced ubiquitination of HNGCR and its subsequent proteasomal degradation. Interacts with BAG6. Interacts with USP13 (via UBA 2 domain); the interaction is direct. Interacts with LMBR1L, UBAC2 and CTNNB1. Interacts with C18orf32. In terms of processing, palmitoylation of the RING-type zing finger by ZDHHC6 promotes localization to the peripheral endoplasmic reticulum. In terms of tissue distribution, expressed in heart, brain, liver, lung, skeletal muscle, kidney and testis. Not detected in spleen.

It localises to the endoplasmic reticulum membrane. The enzyme catalyses [E2 ubiquitin-conjugating enzyme]-S-ubiquitinyl-L-cysteine + [acceptor protein]-L-cysteine = [E2 ubiquitin-conjugating enzyme]-L-cysteine + [acceptor protein]-S-ubiquitinyl-L-cysteine.. It functions in the pathway protein modification; protein ubiquitination. In terms of biological role, E3 ubiquitin-protein ligase that mediates the polyubiquitination of lysine and cysteine residues on target proteins, such as CD3D, CYP3A4, CFTR, INSIG1, SOAT2/ACAT2 and APOB for proteasomal degradation. Component of a VCP/p97-AMFR/gp78 complex that participates in the final step of endoplasmic reticulum-associated degradation (ERAD). The VCP/p97-AMFR/gp78 complex is involved in the sterol-accelerated ERAD degradation of HMGCR through binding to the HMGCR-INSIG1 complex at the ER membrane. In addition, interaction of AMFR with AUP1 facilitates interaction of AMFR with ubiquitin-conjugating enzyme UBE2G2 and ubiquitin ligase RNF139, leading to sterol-induced HMGCR ubiquitination. The ubiquitinated HMGCR is then released from the ER by the complex into the cytosol for subsequent destruction. In addition to ubiquitination on lysine residues, catalyzes ubiquitination on cysteine residues: together with INSIG1, mediates polyubiquitination of SOAT2/ACAT2 at 'Cys-277', leading to its degradation when the lipid levels are low. Catalyzes ubiquitination and subsequent degradation of INSIG1 when cells are depleted of sterols. Mediates polyubiquitination of INSIG2 at 'Cys-215' in some tissues, leading to its degradation. Also regulates ERAD through the ubiquitination of UBL4A a component of the BAG6/BAT3 complex. Also acts as a scaffold protein to assemble a complex that couples ubiquitination, retranslocation and deglycosylation. Mediates tumor invasion and metastasis as a receptor for the GPI/autocrine motility factor. In association with LMBR1L and UBAC2, negatively regulates the canonical Wnt signaling pathway in the lymphocytes by promoting the ubiquitin-mediated degradation of CTNNB1 and Wnt receptors FZD6 and LRP6. Regulates NF-kappa-B and MAPK signaling pathways by mediating 'Lys-27'-linked polyubiquitination of TAB3 and promoting subsequent TAK1/MAP3K7 activation. This chain is E3 ubiquitin-protein ligase AMFR (Amfr), found in Mus musculus (Mouse).